Here is a 170-residue protein sequence, read N- to C-terminus: Cathelicidin antimicrobial peptide (170 aa).

Positions 1 to 30 (MKTQRDGHSLGGWSLMLLLLGLLMPLAIVA) are cleaved as a signal peptide. Positions 31 to 131 (QVLSYKEAVL…DISCDKDNRR (101 aa)) are cleaved as a propeptide — cathelin-like domain (CLD). 2 disulfides stabilise this stretch: Cys-86–Cys-97 and Cys-108–Cys-125. The interval 150-162 (FKRIVQRIKDFLQ) is active core.

This sequence belongs to the cathelicidin family. Monomer, homodimer or homotrimer (in vitro). Oligomerizes as tetra- or hexamer in solution (in vitro). Post-translationally, proteolytically cleaved by proteinase PRTN3 into antibacterial peptide LL-37. Proteolytically cleaved by cathepsin CTSG and neutrophil elastase ELANE. In terms of processing, resistant to proteolytic degradation in solution, and when bound to both zwitterionic (mimicking mammalian membranes) and negatively charged membranes (mimicking bacterial membranes). After secretion onto the skin surface, the CAMP gene product is processed by a serine protease-dependent mechanism into multiple novel antimicrobial peptides distinct from and shorter than cathelicidin LL-37. These peptides show enhanced antimicrobial action, acquiring the ability to kill skin pathogens such as S.aureus, E.coli and C.albicans. These peptides have lost the ability to stimulate CXCL8/IL8 release from keratinocytes. The peptides act synergistically, killing bacteria at lower concentrations when present together, and maintain activity at increased salt condition.

It localises to the secreted. The protein resides in the vesicle. Functionally, antimicrobial protein that is an integral component of the innate immune system. Binds to bacterial lipopolysaccharides (LPS). Acts via neutrophil N-formyl peptide receptors to enhance the release of CXCL2. Postsecretory processing generates multiple cathelicidin antimicrobial peptides with various lengths which act as a topical antimicrobial defense in sweat on skin. The unprocessed precursor form, cathelicidin antimicrobial peptide, inhibits the growth of Gram-negative E.coli and E.aerogenes with efficiencies comparable to that of the mature peptide LL-37 (in vitro). In terms of biological role, antimicrobial peptide that is an integral component of the innate immune system. Binds to bacterial lipopolysaccharides (LPS). Causes membrane permeabilization by forming transmembrane pores (in vitro). Causes lysis of E.coli. Exhibits antimicrobial activity against Gram-negative bacteria such as P.aeruginosa, S.typhimurium, E.aerogenes, E.coli and P.syringae, Gram-positive bacteria such as L.monocytogenes, S.epidermidis, S.pyogenes and S.aureus, as well as vancomycin-resistant enterococci (in vitro). Exhibits antimicrobial activity against methicillin-resistant S.aureus, P.mirabilis, and C.albicans in low-salt media, but not in media containing 100 mM NaCl (in vitro). Forms chiral supramolecular assemblies with quinolone signal (PQS) molecules of P.aeruginosa, which may lead to interference of bacterial quorum signaling and perturbance of bacterial biofilm formation. May form supramolecular fiber-like assemblies on bacterial membranes. Induces cytokine and chemokine producation as well as TNF/TNFA and CSF2/GMCSF production in normal human keratinocytes. Exhibits hemolytic activity against red blood cells. Its function is as follows. Exhibits antimicrobial activity against E.coli and B.megaterium (in vitro). In Hylobates moloch (Silvery gibbon), this protein is Cathelicidin antimicrobial peptide.